Consider the following 573-residue polypeptide: NADH-ubiquinone oxidoreductase chain 5 (573 aa).

Transmembrane regions (helical) follow at residues 4-24 (ISFINLISISLTCFLLSLYYL), 44-64 (IVMTFLFDWMSLLFMSFVLMI), 85-105 (FIMLVLMFVLSMMLLIISPNL), 106-126 (VSILLGWDGLGLVSYCLVIYF), 147-167 (VALLLAIAWMLNYGSWNYIFY), 170-190 (VMQNEFSMLMIGSLVMLAAMT), 212-234 (SALVHSSTLVTAGVYLLIRFNIV), 239-259 (WLGQLLLLLSGLTMFMAGLGA), 268-288 (IIALSTLSQLGLMMSILSMGF), 294-314 (FHLLTHALFKALLFMCAGAII), 337-357 (SACFNVSNLALCGMPFLAGFY), 377-396 (FLYFFSTGLTVSYSFRLVYY), 422-442 (LGLLFMSIIGGSMLNWLIFPF), 452-472 (LKMLTLFVCIVGGLFGYLISI), 487-507 (LTLFLGSMWFMPYISTYGMIF), and 552-572 (LKIYLMLFVFWIMILFSFLLF).

This sequence belongs to the complex I subunit 5 family.

It localises to the mitochondrion inner membrane. The enzyme catalyses a ubiquinone + NADH + 5 H(+)(in) = a ubiquinol + NAD(+) + 4 H(+)(out). In terms of biological role, core subunit of the mitochondrial membrane respiratory chain NADH dehydrogenase (Complex I) that is believed to belong to the minimal assembly required for catalysis. Complex I functions in the transfer of electrons from NADH to the respiratory chain. The immediate electron acceptor for the enzyme is believed to be ubiquinone. This chain is NADH-ubiquinone oxidoreductase chain 5 (mt:ND5), found in Drosophila yakuba (Fruit fly).